Reading from the N-terminus, the 192-residue chain is Natural cytotoxicity triggering receptor 3 (192 aa).

The signal sequence occupies residues 1 to 18; the sequence is MAKVLLIVFIMVYAGSCA. In terms of domain architecture, Ig-like spans 19 to 126; it reads IWVSQPPEIR…VGTGNGTRLV (108 aa). Residues 19 to 147 lie on the Extracellular side of the membrane; it reads IWVSQPPEIR…AEPERAAYTS (129 aa). A disulfide bridge connects residues Cys-39 and Cys-108. 2 N-linked (GlcNAc...) asparagine glycosylation sites follow: Asn-42 and Asn-121. A helical transmembrane segment spans residues 148 to 168; that stretch reads LLLRAGVYALSFLSVATGSVI. Over 169 to 192 the chain is Cytoplasmic; the sequence is YYQGKCLCHVGNTATPPTASEERF.

Belongs to the natural cytotoxicity receptor (NCR) family. As to quaternary structure, homodimer in the unliganted form. Interacts with CD3Z. Interacts with and is activated by binding to NCR3LG1. Interacts with and is activated by binding to BAG6. Interacts with and is inhibited by binding to LGALS3.

The protein resides in the cell membrane. Its function is as follows. Cell membrane receptor of natural killer/NK cells that is activated by binding of extracellular ligands including BAG6 and NCR3LG1. Stimulates NK cells cytotoxicity toward neighboring cells producing these ligands. It controls, for instance, NK cells cytotoxicity against tumor cells. Engagement of NCR3 by BAG6 also promotes myeloid dendritic cells (DC) maturation, both through killing DCs that did not acquire a mature phenotype, and inducing the release by NK cells of TNFA and IFNG that promote DC maturation. The sequence is that of Natural cytotoxicity triggering receptor 3 (Ncr3) from Rattus norvegicus (Rat).